Reading from the N-terminus, the 148-residue chain is UPF0178 protein LPC_0108 (148 aa).

Belongs to the UPF0178 family.

The chain is UPF0178 protein LPC_0108 from Legionella pneumophila (strain Corby).